We begin with the raw amino-acid sequence, 214 residues long: Phosphatidylcholine transfer protein (214 aa).

M1 carries the post-translational modification N-acetylmethionine. One can recognise an START domain in the interval 1-212 (MAGAACCFSD…MVKACQNYHK (212 aa)). Positions 72 and 78 each coordinate a 1,2-diacyl-sn-glycero-3-phosphocholine. Position 139 is a phosphoserine (S139). Q157 lines the a 1,2-diacyl-sn-glycero-3-phosphocholine pocket.

In terms of assembly, interacts with ACOT13/THEM2. Abundant in liver of pups but levels in liver decrease 10-fold about 2 weeks after birth. In adult, highly expressed in epididymis, testis, kidney and bone-marrow derived mast cells.

It localises to the cytoplasm. Catalyzes the transfer of phosphatidylcholine between membranes. Binds a single lipid molecule. This chain is Phosphatidylcholine transfer protein (Pctp), found in Mus musculus (Mouse).